The primary structure comprises 168 residues: Thioredoxin Y, chloroplastic (168 aa).

The transit peptide at 1 to 58 (MAAFTSTTTAAAASPTPCRPAALVARSSAAPLRSAAPVVVAAGLRRAAAPSRRGATLR) directs the protein to the chloroplast. The Thioredoxin domain occupies 59 to 165 (VQAKKQTFSS…LIQQIESALE (107 aa)). Residues cysteine 89 and cysteine 92 each act as nucleophile in the active site. A disulfide bridge connects residues cysteine 89 and cysteine 92.

It belongs to the thioredoxin family. Plant Y-type subfamily.

Its subcellular location is the plastid. The protein localises to the chloroplast. In terms of biological role, probable thiol-disulfide oxidoreductase that may participate in various redox reactions. This chain is Thioredoxin Y, chloroplastic, found in Oryza sativa subsp. japonica (Rice).